The chain runs to 143 residues: Large ribosomal subunit protein uL13 (143 aa).

This sequence belongs to the universal ribosomal protein uL13 family. In terms of assembly, part of the 50S ribosomal subunit.

Functionally, this protein is one of the early assembly proteins of the 50S ribosomal subunit, although it is not seen to bind rRNA by itself. It is important during the early stages of 50S assembly. The polypeptide is Large ribosomal subunit protein uL13 (Alkaliphilus oremlandii (strain OhILAs) (Clostridium oremlandii (strain OhILAs))).